The sequence spans 420 residues: MAFIAALGLLMAEICPAVICCSDGTLGMHNAVQKGQDTQKQLDSLTLASINTDFAFSFYKELALKNPHKNIAFSPFGIATALNSLTLGAKGNTLEEILEVLKFNLTETSEADIHQGFKHLLQRLSHPGDQVQIRTGNALFVEKHLQILAEFKEKARALYHTEVFTANFQQPHEAMKLINSYMSNQTQGKIKELVSDMDGNTSMVIVNDLFFKAEWMVPFNSDDTFMGKFIVDRSRHVKVPMMKTKNLRTPYFRDEELKCTVVELNYKGNGKAMFILPDQGKMQQVEASLQPGTLKKWRKSLRPRKIKELHLPKFSLSQHYNLEDILPELGIRELFSTQADLSGITGVKNITVSEMIHSTELDMTEKGTEGDAITIVGYNFMSAKLKPVFVKFEDQFLYIVLDQGDLWIHVMGKVINPSEK.

Residues 1-17 (MAFIAALGLLMAEICPA) form the signal peptide. N-linked (GlcNAc...) asparagine glycans are attached at residues N104 and N349. Residues 367 to 392 (GTEGDAITIVGYNFMSAKLKPVFVKF) form an RCL region.

This sequence belongs to the serpin family.

Its subcellular location is the secreted. The chain is Serine protease inhibitor A3B (Serpina3b) from Mus musculus (Mouse).